A 279-amino-acid polypeptide reads, in one-letter code: MKVISSIQELRDQLRGQNRTAFVPTMGNLHEGHLSLMRLARQHGDPVVASIFVNRLQFGPNEDFDKYPRTLQDDIEKLQNENVYVLFAPTERDMYPEPQEYRVLPPDDLGGILEGEFRPGFFAGVCTVVTKLMSCVQPRVAVFGKKDYQQLMIVRRMCQQLALPVEIIAAETVRDEDGLALSSRNRYLTADERTEAPELVKTLQRVRESVLGGERDLGKLEQHARAHLAERGWAPDYIAIRRRANLIAPSAAELEAGEPLVVLAAAKLGATRLIDNLEI.

26-33 contributes to the ATP binding site; sequence MGNLHEGH. The active-site Proton donor is His33. A (R)-pantoate-binding site is contributed by Gln57. Gln57 provides a ligand contact to beta-alanine. An ATP-binding site is contributed by 144-147; it reads GKKD. Residue Gln150 coordinates (R)-pantoate. Residues Val173 and 181 to 184 contribute to the ATP site; that span reads LSSR.

This sequence belongs to the pantothenate synthetase family. In terms of assembly, homodimer.

It localises to the cytoplasm. The enzyme catalyses (R)-pantoate + beta-alanine + ATP = (R)-pantothenate + AMP + diphosphate + H(+). It participates in cofactor biosynthesis; (R)-pantothenate biosynthesis; (R)-pantothenate from (R)-pantoate and beta-alanine: step 1/1. Functionally, catalyzes the condensation of pantoate with beta-alanine in an ATP-dependent reaction via a pantoyl-adenylate intermediate. This Burkholderia vietnamiensis (strain G4 / LMG 22486) (Burkholderia cepacia (strain R1808)) protein is Pantothenate synthetase.